The following is a 168-amino-acid chain: Small ribosomal subunit protein uS4 (168 aa).

Positions Arg-103–Lys-167 constitute an S4 RNA-binding domain.

This sequence belongs to the universal ribosomal protein uS4 family. Part of the 30S ribosomal subunit. Contacts protein S5. The interaction surface between S4 and S5 is involved in control of translational fidelity.

Its function is as follows. One of the primary rRNA binding proteins, it binds directly to 16S rRNA where it nucleates assembly of the body of the 30S subunit. Functionally, with S5 and S12 plays an important role in translational accuracy. The sequence is that of Small ribosomal subunit protein uS4 from Staphylothermus marinus (strain ATCC 43588 / DSM 3639 / JCM 9404 / F1).